The following is a 339-amino-acid chain: Uroporphyrinogen decarboxylase (339 aa).

Substrate-binding positions include 23-27, aspartate 72, tyrosine 147, threonine 202, and histidine 315; that span reads RQAGR.

It belongs to the uroporphyrinogen decarboxylase family. As to quaternary structure, homodimer.

The protein resides in the cytoplasm. The catalysed reaction is uroporphyrinogen III + 4 H(+) = coproporphyrinogen III + 4 CO2. Its pathway is porphyrin-containing compound metabolism; protoporphyrin-IX biosynthesis; coproporphyrinogen-III from 5-aminolevulinate: step 4/4. Catalyzes the decarboxylation of four acetate groups of uroporphyrinogen-III to yield coproporphyrinogen-III. This is Uroporphyrinogen decarboxylase from Geotalea daltonii (strain DSM 22248 / JCM 15807 / FRC-32) (Geobacter daltonii).